The primary structure comprises 327 residues: Methionyl-tRNA formyltransferase (327 aa).

Residue 113 to 116 (SILP) coordinates (6S)-5,6,7,8-tetrahydrofolate.

The protein belongs to the Fmt family.

It carries out the reaction L-methionyl-tRNA(fMet) + (6R)-10-formyltetrahydrofolate = N-formyl-L-methionyl-tRNA(fMet) + (6S)-5,6,7,8-tetrahydrofolate + H(+). Attaches a formyl group to the free amino group of methionyl-tRNA(fMet). The formyl group appears to play a dual role in the initiator identity of N-formylmethionyl-tRNA by promoting its recognition by IF2 and preventing the misappropriation of this tRNA by the elongation apparatus. This is Methionyl-tRNA formyltransferase from Colwellia psychrerythraea (strain 34H / ATCC BAA-681) (Vibrio psychroerythus).